The chain runs to 453 residues: Cysteine--tRNA ligase (453 aa).

C31 is a Zn(2+) binding site. Positions 33 to 43 (PTVYDNPHIGN) match the 'HIGH' region motif. Zn(2+) contacts are provided by C213, H238, and E242. A 'KMSKS' region motif is present at residues 271–275 (KMAKS). ATP is bound at residue K274.

It belongs to the class-I aminoacyl-tRNA synthetase family. In terms of assembly, monomer. Zn(2+) serves as cofactor.

The protein localises to the cytoplasm. It catalyses the reaction tRNA(Cys) + L-cysteine + ATP = L-cysteinyl-tRNA(Cys) + AMP + diphosphate. The polypeptide is Cysteine--tRNA ligase (Pelagibacter ubique (strain HTCC1062)).